Reading from the N-terminus, the 262-residue chain is Thiazole synthase (262 aa).

Residue Lys-97 is the Schiff-base intermediate with DXP of the active site. 1-deoxy-D-xylulose 5-phosphate-binding positions include Gly-158, 185–186 (AG), and 207–208 (NT). Positions 243-262 (DKAQASTPTVGQPFWHSAEY) are disordered.

The protein belongs to the ThiG family. As to quaternary structure, homotetramer. Forms heterodimers with either ThiH or ThiS.

Its subcellular location is the cytoplasm. The enzyme catalyses [ThiS sulfur-carrier protein]-C-terminal-Gly-aminoethanethioate + 2-iminoacetate + 1-deoxy-D-xylulose 5-phosphate = [ThiS sulfur-carrier protein]-C-terminal Gly-Gly + 2-[(2R,5Z)-2-carboxy-4-methylthiazol-5(2H)-ylidene]ethyl phosphate + 2 H2O + H(+). It functions in the pathway cofactor biosynthesis; thiamine diphosphate biosynthesis. Functionally, catalyzes the rearrangement of 1-deoxy-D-xylulose 5-phosphate (DXP) to produce the thiazole phosphate moiety of thiamine. Sulfur is provided by the thiocarboxylate moiety of the carrier protein ThiS. In vitro, sulfur can be provided by H(2)S. The chain is Thiazole synthase from Neisseria meningitidis serogroup A / serotype 4A (strain DSM 15465 / Z2491).